A 116-amino-acid polypeptide reads, in one-letter code: Aspartate 1-decarboxylase (116 aa).

The Schiff-base intermediate with substrate; via pyruvic acid role is filled by Ser-25. The residue at position 25 (Ser-25) is a Pyruvic acid (Ser). Residue Thr-57 coordinates substrate. Catalysis depends on Tyr-58, which acts as the Proton donor. Position 73–75 (73–75) interacts with substrate; it reads GAA.

It belongs to the PanD family. In terms of assembly, heterooctamer of four alpha and four beta subunits. Pyruvate serves as cofactor. Is synthesized initially as an inactive proenzyme, which is activated by self-cleavage at a specific serine bond to produce a beta-subunit with a hydroxyl group at its C-terminus and an alpha-subunit with a pyruvoyl group at its N-terminus.

It localises to the cytoplasm. The catalysed reaction is L-aspartate + H(+) = beta-alanine + CO2. It participates in cofactor biosynthesis; (R)-pantothenate biosynthesis; beta-alanine from L-aspartate: step 1/1. Functionally, catalyzes the pyruvoyl-dependent decarboxylation of aspartate to produce beta-alanine. In Phocaeicola vulgatus (strain ATCC 8482 / DSM 1447 / JCM 5826 / CCUG 4940 / NBRC 14291 / NCTC 11154) (Bacteroides vulgatus), this protein is Aspartate 1-decarboxylase.